Here is a 259-residue protein sequence, read N- to C-terminus: 5'-nucleotidase SurE (259 aa).

Positions 8, 9, 40, and 95 each coordinate a divalent metal cation.

Belongs to the SurE nucleotidase family. It depends on a divalent metal cation as a cofactor.

It is found in the cytoplasm. The catalysed reaction is a ribonucleoside 5'-phosphate + H2O = a ribonucleoside + phosphate. Functionally, nucleotidase that shows phosphatase activity on nucleoside 5'-monophosphates. The sequence is that of 5'-nucleotidase SurE from Oleidesulfovibrio alaskensis (strain ATCC BAA-1058 / DSM 17464 / G20) (Desulfovibrio alaskensis).